Reading from the N-terminus, the 55-residue chain is UPF0391 membrane protein RALTA_A0099 (55 aa).

2 consecutive transmembrane segments (helical) span residues 5-25 (ALVF…GIAA) and 30-50 (IAKI…VMGL).

This sequence belongs to the UPF0391 family.

Its subcellular location is the cell membrane. The sequence is that of UPF0391 membrane protein RALTA_A0099 from Cupriavidus taiwanensis (strain DSM 17343 / BCRC 17206 / CCUG 44338 / CIP 107171 / LMG 19424 / R1) (Ralstonia taiwanensis (strain LMG 19424)).